The chain runs to 410 residues: Elongation factor Tu, apicoplast (410 aa).

The tr-type G domain occupies 10 to 214 (KQHINLGTIG…QIIDNIIIPT (205 aa)). A G1 region spans residues 19-26 (GHVDHGKT). 19–26 (GHVDHGKT) contributes to the GTP binding site. Threonine 26 serves as a coordination point for Mg(2+). The segment at 60-64 (GITIN) is G2. Residues 81-84 (DCPG) are G3. GTP-binding positions include 81–85 (DCPGH) and 136–139 (NKED). The segment at 136 to 139 (NKED) is G4. The G5 stretch occupies residues 174–176 (SAL).

The protein belongs to the TRAFAC class translation factor GTPase superfamily. Classic translation factor GTPase family. EF-Tu/EF-1A subfamily.

Its subcellular location is the plastid. The protein resides in the apicoplast. It carries out the reaction GTP + H2O = GDP + phosphate + H(+). In terms of biological role, GTP hydrolase that promotes the GTP-dependent binding of aminoacyl-tRNA to the A-site of ribosomes during protein biosynthesis. This Plasmodium falciparum (isolate 3D7) protein is Elongation factor Tu, apicoplast (tufA).